The primary structure comprises 121 residues: Large ribosomal subunit protein uL18 (121 aa).

Belongs to the universal ribosomal protein uL18 family. Part of the 50S ribosomal subunit; part of the 5S rRNA/L5/L18/L25 subcomplex. Contacts the 5S and 23S rRNAs.

This is one of the proteins that bind and probably mediate the attachment of the 5S RNA into the large ribosomal subunit, where it forms part of the central protuberance. The protein is Large ribosomal subunit protein uL18 of Burkholderia mallei (strain NCTC 10247).